Reading from the N-terminus, the 876-residue chain is DNA mismatch repair protein MutS (876 aa).

ATP is bound at residue 626 to 633; sequence GPNMAGKS. Residues 829 to 856 are disordered; it reads FRAAPPPPAPAAPPKASQVEERLRAIQP. A compositionally biased stretch (pro residues) spans 832 to 841; the sequence is APPPPAPAAP.

It belongs to the DNA mismatch repair MutS family.

This protein is involved in the repair of mismatches in DNA. It is possible that it carries out the mismatch recognition step. This protein has a weak ATPase activity. In Cereibacter sphaeroides (strain ATCC 17025 / ATH 2.4.3) (Rhodobacter sphaeroides), this protein is DNA mismatch repair protein MutS.